A 145-amino-acid polypeptide reads, in one-letter code: Sec-independent protein translocase protein TatB (145 aa).

The helical transmembrane segment at 1–21 threads the bilayer; it reads MLDVGMTELLCFAIIAILVLG.

The protein belongs to the TatB family. As to quaternary structure, the Tat system comprises two distinct complexes: a TatABC complex, containing multiple copies of TatA, TatB and TatC subunits, and a separate TatA complex, containing only TatA subunits. Substrates initially bind to the TatABC complex, which probably triggers association of the separate TatA complex to form the active translocon.

It is found in the cell inner membrane. Part of the twin-arginine translocation (Tat) system that transports large folded proteins containing a characteristic twin-arginine motif in their signal peptide across membranes. Together with TatC, TatB is part of a receptor directly interacting with Tat signal peptides. TatB may form an oligomeric binding site that transiently accommodates folded Tat precursor proteins before their translocation. In Acinetobacter baumannii (strain ATCC 17978 / DSM 105126 / CIP 53.77 / LMG 1025 / NCDC KC755 / 5377), this protein is Sec-independent protein translocase protein TatB.